The chain runs to 191 residues: Putative glutathione-dependent formaldehyde-activating enzyme (191 aa).

In terms of domain architecture, CENP-V/GFA spans 20–166 (FAGGKLRCHC…FKALGLQTYD (147 aa)). 7 residues coordinate Zn(2+): C27, C29, C48, C50, C53, C95, and C98.

Belongs to the Gfa family. Zn(2+) is required as a cofactor.

It catalyses the reaction S-(hydroxymethyl)glutathione = glutathione + formaldehyde. The protein operates within one-carbon metabolism; formaldehyde degradation; formate from formaldehyde (glutathione route): step 1/3. In terms of biological role, catalyzes the condensation of formaldehyde and glutathione to S-hydroxymethylglutathione. The sequence is that of Putative glutathione-dependent formaldehyde-activating enzyme from Penicillium rubens (strain ATCC 28089 / DSM 1075 / NRRL 1951 / Wisconsin 54-1255) (Penicillium chrysogenum).